The following is a 344-amino-acid chain: Glyceraldehyde-3-phosphate dehydrogenase (344 aa).

Residues 11 to 12 (TI) and Gly110 contribute to the NAD(+) site. 139–141 (SCN) serves as a coordination point for D-glyceraldehyde 3-phosphate. Cys140 serves as the catalytic Nucleophile. An NAD(+)-binding site is contributed by Arg169. Residue 195-196 (HG) coordinates D-glyceraldehyde 3-phosphate. Gln302 lines the NAD(+) pocket.

Belongs to the glyceraldehyde-3-phosphate dehydrogenase family. As to quaternary structure, homotetramer.

The protein resides in the cytoplasm. It catalyses the reaction D-glyceraldehyde 3-phosphate + phosphate + NADP(+) = (2R)-3-phospho-glyceroyl phosphate + NADPH + H(+). The catalysed reaction is D-glyceraldehyde 3-phosphate + phosphate + NAD(+) = (2R)-3-phospho-glyceroyl phosphate + NADH + H(+). It functions in the pathway carbohydrate degradation; glycolysis; pyruvate from D-glyceraldehyde 3-phosphate: step 1/5. The sequence is that of Glyceraldehyde-3-phosphate dehydrogenase from Pyrobaculum neutrophilum (strain DSM 2338 / JCM 9278 / NBRC 100436 / V24Sta) (Thermoproteus neutrophilus).